The following is a 653-amino-acid chain: Eukaryotic translation initiation factor 4E-binding protein Mextli (653 aa).

In terms of domain architecture, KH spans 227 to 292 (YCKDEVVIRN…DKINYAKQLM (66 aa)). Disordered regions lie at residues 311–335 (VGGS…TPTG) and 515–570 (EGDD…AGTN). Low complexity-rich tracts occupy residues 314 to 323 (SCSSLNSSNS) and 525 to 536 (SNGGSSTSNQNG). Over residues 546-563 (SRKESTPETKGAREKGDL) the composition is skewed to basic and acidic residues.

As to quaternary structure, interacts with eukaryotic translation initiation factor eIF4E1. Also interacts with eukaryotic translation initiation factor 3 complex members eif3-S9/eif3b, Int6/eif3e and eIF-3p40/eif3h and with CG3225.

The protein localises to the cytoplasm. Its subcellular location is the cytoplasmic ribonucleoprotein granule. Plays a role in promoting translation. The protein is Eukaryotic translation initiation factor 4E-binding protein Mextli of Drosophila melanogaster (Fruit fly).